A 98-amino-acid chain; its full sequence is Small ribosomal subunit protein uS19 (98 aa).

A disordered region spans residues 77 to 98 (TRTFRGHAGGKAEKGGSAPRKK).

This sequence belongs to the universal ribosomal protein uS19 family.

Protein S19 forms a complex with S13 that binds strongly to the 16S ribosomal RNA. This Chlorobium limicola (strain DSM 245 / NBRC 103803 / 6330) protein is Small ribosomal subunit protein uS19.